We begin with the raw amino-acid sequence, 370 residues long: MLDTVRVDLPGRAYDVRIGSGLLPEAGGHVLPLLKRPRVAVVTDETVAGLHLEALRAGLARDGIEMSALALPAGEATKSWAPLERTVGWLLDQKVERGDVVVAFGGGVIGDLVGFAAAILRRGVRFVQIPTSLLAQVDSSVGGKTGINAAQGKNLIGAFHQPSLVLADIDVLGSLTARDFLAGYGEVVKYGLLGDLTFFEWLEQNGPALAAGDKGARCEAVRRSVQMKADIVIRDETEQGDRALLNLGHTFGHALEAATGYSDRLLHGEGVAIGCALAFELSARMGLCSQESPSRVRAHLKAMGMKTDLHDIPGDLPDAACLLDLMGQDKKVTQGKLHFILARGLGEAFVTSDVAASDVLMVLEDALRSK.

Residues 107–111 (GVIGD), 131–132 (TS), Lys-144, and Lys-153 contribute to the NAD(+) site. The Zn(2+) site is built by Glu-186, His-249, and His-267.

This sequence belongs to the sugar phosphate cyclases superfamily. Dehydroquinate synthase family. Co(2+) serves as cofactor. Requires Zn(2+) as cofactor. NAD(+) is required as a cofactor.

The protein resides in the cytoplasm. The enzyme catalyses 7-phospho-2-dehydro-3-deoxy-D-arabino-heptonate = 3-dehydroquinate + phosphate. Its pathway is metabolic intermediate biosynthesis; chorismate biosynthesis; chorismate from D-erythrose 4-phosphate and phosphoenolpyruvate: step 2/7. Catalyzes the conversion of 3-deoxy-D-arabino-heptulosonate 7-phosphate (DAHP) to dehydroquinate (DHQ). The protein is 3-dehydroquinate synthase of Roseobacter denitrificans (strain ATCC 33942 / OCh 114) (Erythrobacter sp. (strain OCh 114)).